The sequence spans 300 residues: Protoheme IX farnesyltransferase (300 aa).

The next 9 membrane-spanning stretches (helical) occupy residues 26–46 (VVQL…PGLP), 54–74 (IAWA…FNCI), 102–122 (LLFS…LVNP), 123–143 (LTMW…TLIL), 150–170 (NIVI…AAMT), 177–197 (ALIL…ALAL), 224–244 (VLLY…YGMS), 246–266 (WPYL…GFAL), and 279–299 (FRFS…DHYL).

The protein belongs to the UbiA prenyltransferase family. Protoheme IX farnesyltransferase subfamily.

The protein localises to the cell inner membrane. The catalysed reaction is heme b + (2E,6E)-farnesyl diphosphate + H2O = Fe(II)-heme o + diphosphate. Its pathway is porphyrin-containing compound metabolism; heme O biosynthesis; heme O from protoheme: step 1/1. Functionally, converts heme B (protoheme IX) to heme O by substitution of the vinyl group on carbon 2 of heme B porphyrin ring with a hydroxyethyl farnesyl side group. The sequence is that of Protoheme IX farnesyltransferase from Verminephrobacter eiseniae (strain EF01-2).